Here is a 677-residue protein sequence, read N- to C-terminus: Methionine--tRNA ligase (677 aa).

The 'HIGH' region signature appears at 15–25; sequence PYANGSIHLGH. The Zn(2+) site is built by Cys-146, Cys-149, Cys-159, and Cys-162. Positions 333-337 match the 'KMSKS' region motif; sequence KMSKS. Lys-336 lines the ATP pocket. The tRNA-binding domain occupies 575-677; sequence DFAKVDLRVA…DGAKPGQQVK (103 aa).

This sequence belongs to the class-I aminoacyl-tRNA synthetase family. MetG type 1 subfamily. As to quaternary structure, homodimer. The cofactor is Zn(2+).

It is found in the cytoplasm. It catalyses the reaction tRNA(Met) + L-methionine + ATP = L-methionyl-tRNA(Met) + AMP + diphosphate. Its function is as follows. Is required not only for elongation of protein synthesis but also for the initiation of all mRNA translation through initiator tRNA(fMet) aminoacylation. The sequence is that of Methionine--tRNA ligase from Klebsiella pneumoniae subsp. pneumoniae (strain ATCC 700721 / MGH 78578).